We begin with the raw amino-acid sequence, 120 residues long: UPF0102 protein TW312 (120 aa).

This sequence belongs to the UPF0102 family.

The protein is UPF0102 protein TW312 of Tropheryma whipplei (strain TW08/27) (Whipple's bacillus).